The primary structure comprises 283 residues: S-adenosylmethionine mitochondrial carrier protein homolog (283 aa).

Solcar repeat units follow at residues 11-84 (LKFF…GKQF), 93-178 (DSPY…FKLQ), and 187-275 (STPF…TTRI). 6 consecutive transmembrane segments (helical) span residues 14–34 (FHALVAGGVAGMVVDIALFPI), 55–75 (GIYKGLAPAAAGSAPTAALFF), 99–119 (MAAASAAEVLACLIRVPVEIA), 152–172 (RGFGSTIMREIPFSLIQFPLW), 190–210 (FSVALCGAVAGGISAGLTTPL), and 248–268 (FAGFVPRVLWITLGGAFFFGF).

It belongs to the mitochondrial carrier (TC 2.A.29) family.

The protein resides in the mitochondrion inner membrane. In terms of biological role, mitochondrial solute carriers shuttle metabolites, nucleotides, and cofactors through the mitochondrial inner membrane. May mediate the transport of S-adenosylmethionine (SAM) into the mitochondria. This chain is S-adenosylmethionine mitochondrial carrier protein homolog, found in Drosophila melanogaster (Fruit fly).